The chain runs to 457 residues: UPF0328 protein ECU05_0030 (457 aa).

Disordered regions lie at residues 1-112 (MPRP…PTAT) and 157-183 (VKSQ…NPRI). Residues 74–94 (HTEGCHTHEANPEPNTKHTET) are compositionally biased toward basic and acidic residues. The segment covering 102–112 (CPPPHPGPTAT) has biased composition (pro residues).

Belongs to the UPF0328 family.

The polypeptide is UPF0328 protein ECU05_0030 (Encephalitozoon cuniculi (strain GB-M1) (Microsporidian parasite)).